Consider the following 764-residue polypeptide: Protein FAR1-RELATED SEQUENCE 7 (764 aa).

Positions 42-118 constitute an FAR1 1 domain; sequence DYYNSYATRT…QKEHNHDLGG (77 aa). Residues 119–144 form a disordered region; that stretch reads HIEEAQTTPRPSVQQRAPAPTKLGIS. Residues 123 to 133 are compositionally biased toward polar residues; the sequence is AQTTPRPSVQQ. The FAR1 2 domain occupies 204–280; it reads QFYQAYAEVV…NKDHNHDLEP (77 aa). One can recognise an MULE domain in the interval 375–471; that stretch reads AVVFDTSYRK…SAWQIRSKER (97 aa). The SWIM-type zinc-finger motif lies at 650–686; sequence HAVTFSASNLNASCSCQMFEYEGLLCRHILKVFNLLD.

The protein belongs to the FHY3/FAR1 family. As to expression, expressed in hypocotyls, rosette and cauline leaves, inflorescences stems, flowers and siliques.

The protein resides in the nucleus. Its function is as follows. Putative transcription activator involved in regulating light control of development. This is Protein FAR1-RELATED SEQUENCE 7 (FRS7) from Arabidopsis thaliana (Mouse-ear cress).